A 201-amino-acid polypeptide reads, in one-letter code: Troponin I (201 aa).

Position 1 is an N-acetylalanine (Ala-1). Positions 1–33 are enriched in basic and acidic residues; the sequence is ADKAKAAEEAKKKQDDIDRKKAEVRKRLEEQSL. The disordered stretch occupies residues 1–45; that stretch reads ADKAKAAEEAKKKQDDIDRKKAEVRKRLEEQSLKKQKKGFMTPER. Residues 108–117 form a troponin T-interaction region; it reads IESDKYDVEL. The segment at 135–148 is actin-binding; sequence DLRGKFIKPTLKKV. Residues Lys-142 and Lys-146 each carry the N6,N6,N6-trimethyllysine modification. Residues 182-201 form a disordered region; sequence EDDKGATEGDGPAAEEVAAE.

This sequence belongs to the troponin I family.

Its function is as follows. Troponin I is the actomyosin ATPase inhibitory subunit present in the thin filament regulatory complex. This Astacus leptodactylus (Turkish narrow-clawed crayfish) protein is Troponin I.